The primary structure comprises 208 residues: Kininogen-1b (208 aa).

The signal sequence occupies residues 1 to 23 (MRLWFCLSFFIVLCLEHFPETLA). Positions 27 to 44 (NVPESEEKTEQYLRDLPK) are enriched in basic and acidic residues. Residues 27 to 208 (NVPESEEKTE…RGKFHSQSHV (182 aa)) are disordered.

Belongs to the bradykinin-related peptide family. As to expression, expressed by the skin glands.

It is found in the secreted. Its function is as follows. In vitro, produces constriction of guinea pig ileum smooth muscle. May target bradykinin receptors (BDKRB). The chain is Kininogen-1b from Bombina maxima (Giant fire-bellied toad).